We begin with the raw amino-acid sequence, 481 residues long: MRALPLDIGPLHFVGIGGIGMSGIAEVLHNLGYRVQGSDLSDNANVKRLRDLGIPIAIGHKAANLGDAQVVVISSAVKASNPEVMDARARFLPVVRRAEMLGELMRLKWSIAVAGTHGKTTTTSLVAQLLDAAGLDPTVINGGILNARGTNAYLGTGEWMVVEADESDGTFTKLPATISLVTNIDPEHLDFYGTFDKVREAFRAFIHNLPFYGFACMCIDHPEVQAMIPQLQDRKIITYGLSPQADIRGANVTLGPRGARFDVILTDRAGGGSRTIEGIRLPMYGRHNVLNALGAIGIAAEMGIDDAVIRDGLYHFEGVKRRFTRTGDAGGVTVIDDYGHHPVEIAAVLKAARDATEREVIAVVQPHRYSRLNSLFEDFCTCFNDADQVVVADVYAAGEQPIPGASKEALAEGLKVHGHKSVHVLTNEQALPELIARIAKPGDLVVCLGAGSISTWANALPKQLEAVQGRRRQTTLAGGAP.

ATP is bound at residue 115-121 (GTHGKTT).

The protein belongs to the MurCDEF family.

It is found in the cytoplasm. It catalyses the reaction UDP-N-acetyl-alpha-D-muramate + L-alanine + ATP = UDP-N-acetyl-alpha-D-muramoyl-L-alanine + ADP + phosphate + H(+). The protein operates within cell wall biogenesis; peptidoglycan biosynthesis. Functionally, cell wall formation. This chain is UDP-N-acetylmuramate--L-alanine ligase, found in Rhodospirillum rubrum (strain ATCC 11170 / ATH 1.1.1 / DSM 467 / LMG 4362 / NCIMB 8255 / S1).